The primary structure comprises 671 residues: DNA ligase (671 aa).

NAD(+) contacts are provided by residues 32–36 (DAEYD), 81–82 (SL), and Glu113. Lys115 acts as the N6-AMP-lysine intermediate in catalysis. NAD(+) contacts are provided by Arg136, Glu173, Lys290, and Lys314. Cys408, Cys411, Cys426, and Cys432 together coordinate Zn(2+). Residues 593–671 (EIDSPFAGKT…EAEMIRLLGA (79 aa)) form the BRCT domain.

The protein belongs to the NAD-dependent DNA ligase family. LigA subfamily. The cofactor is Mg(2+). Mn(2+) serves as cofactor.

It carries out the reaction NAD(+) + (deoxyribonucleotide)n-3'-hydroxyl + 5'-phospho-(deoxyribonucleotide)m = (deoxyribonucleotide)n+m + AMP + beta-nicotinamide D-nucleotide.. Functionally, DNA ligase that catalyzes the formation of phosphodiester linkages between 5'-phosphoryl and 3'-hydroxyl groups in double-stranded DNA using NAD as a coenzyme and as the energy source for the reaction. It is essential for DNA replication and repair of damaged DNA. The protein is DNA ligase of Salmonella paratyphi A (strain ATCC 9150 / SARB42).